Here is a 412-residue protein sequence, read N- to C-terminus: Putative competence-damage inducible protein (412 aa).

The protein belongs to the CinA family.

The polypeptide is Putative competence-damage inducible protein (Bacillus cereus (strain ATCC 10987 / NRS 248)).